The chain runs to 422 residues: S-adenosylmethionine synthase (422 aa).

Residue H16 participates in ATP binding. D18 contacts Mg(2+). E44 contributes to the K(+) binding site. L-methionine-binding residues include E57 and Q100. The tract at residues 100–110 (QSPDISQGVSA) is flexible loop. ATP contacts are provided by residues 175–177 (DGK), 251–252 (KF), D260, 266–267 (RK), A283, and K287. D260 is an L-methionine binding site. Residue K291 coordinates L-methionine.

It belongs to the AdoMet synthase family. Homotetramer; dimer of dimers. It depends on Mg(2+) as a cofactor. K(+) is required as a cofactor.

Its subcellular location is the cytoplasm. The enzyme catalyses L-methionine + ATP + H2O = S-adenosyl-L-methionine + phosphate + diphosphate. It functions in the pathway amino-acid biosynthesis; S-adenosyl-L-methionine biosynthesis; S-adenosyl-L-methionine from L-methionine: step 1/1. In terms of biological role, catalyzes the formation of S-adenosylmethionine (AdoMet) from methionine and ATP. The overall synthetic reaction is composed of two sequential steps, AdoMet formation and the subsequent tripolyphosphate hydrolysis which occurs prior to release of AdoMet from the enzyme. The polypeptide is S-adenosylmethionine synthase (Rippkaea orientalis (strain PCC 8801 / RF-1) (Cyanothece sp. (strain PCC 8801))).